Consider the following 96-residue polypeptide: MAHHNGPRKKTRYKFKKELRQRGLPPVTSVIQQFEVGEKVHIVVNSSVQKGMPHRRFHGLTGTVIGKRGRAWMLTIHDGNAEKTVIARPQHLKAQK.

The protein belongs to the eukaryotic ribosomal protein eL21 family.

The polypeptide is Large ribosomal subunit protein eL21 (Methanoregula boonei (strain DSM 21154 / JCM 14090 / 6A8)).